The primary structure comprises 821 residues: MSPSPAERAEDLRRQIAQANRAYHELDAPEIPDVDYDRMVRELEALEREHPELARADSPTQQVGARPSGRFAEVRHAVPMLSLSNAFSDEEVADFVRRIDERLGRRSLQFSAEPKMDGLAISLRYEEGHFVLGATRGDGSTGEDVTANLREIGDIPKRLNGKDWPDVLEVRGEVYMARADFEAYNERARLQGGKVLANPRNAAAGSLRQLDPKISAQRKLSFFAYGTGEVQGGELPDTHSGTLAQLGSWGFPVSALCRVVDGTDGLLGYYRDIGERRDGLPFDIDGVVYKLDDRAGQQAMGFVSRAPRWAIAHKFPAQEQSTTVEAIEIQIGRTGAATPVARLAPVAVAGVIVSNATLHNADQIARLDVRVGDSVIVRRAGDVIPEVVSVILDRRPQGTTPWQMPTQCPVCGSEIVREEGAAAWRCSGELSCPAQRKEAIAHFASRRAMDIDGLGDKYIETLVDAGIVKGVADLYRLSRDQLLHLKLVLDAEDPSALAAALKLHLPAEGSGAVLNAVLKLDGNDPGWRAQALVQPASFEWNTKKIATKWADNLIAAIDASRAATLERLLFALGIEHVGESTAKALAQWFGDLELIRHLPWPLFKRVPDIGGEVARSLGHFFEQQGNQQAIDDLLQVGQVRISDAHAPSAKLREGLDLAQLLVESEIPGITRLRAEKLVAALPSAQAVLDAEHGQFVNAGLPDDTARGLAEWLDAEGHGAMLLAAEKAMRQILAKAPALAEIVAGPLDGQTVVLTGTLAQLTRDAAKERLEALGAKVSGSVSKKTSFVVAGTEAGSKLDKAQSLGVPVWDEDRLLAYLAEHE.

Residues 33–37 (DVDYD), 82–83 (SL), and Glu-113 contribute to the NAD(+) site. Residue Lys-115 is the N6-AMP-lysine intermediate of the active site. NAD(+)-binding residues include Arg-136, Glu-173, Lys-290, and Lys-314. The Zn(2+) site is built by Cys-408, Cys-411, Cys-426, and Cys-432. In terms of domain architecture, BRCT spans 741-821 (IVAGPLDGQT…RLLAYLAEHE (81 aa)).

It belongs to the NAD-dependent DNA ligase family. LigA subfamily. Mg(2+) is required as a cofactor. Requires Mn(2+) as cofactor.

The catalysed reaction is NAD(+) + (deoxyribonucleotide)n-3'-hydroxyl + 5'-phospho-(deoxyribonucleotide)m = (deoxyribonucleotide)n+m + AMP + beta-nicotinamide D-nucleotide.. DNA ligase that catalyzes the formation of phosphodiester linkages between 5'-phosphoryl and 3'-hydroxyl groups in double-stranded DNA using NAD as a coenzyme and as the energy source for the reaction. It is essential for DNA replication and repair of damaged DNA. This is DNA ligase from Stenotrophomonas maltophilia (strain R551-3).